The following is a 373-amino-acid chain: Ribonuclease D (373 aa).

In terms of domain architecture, 3'-5' exonuclease spans 3–171 (YQLITTDAGL…MAKRLVQETE (169 aa)). Positions 210 to 289 (RPRQLGCLQK…AEAAELEESA (80 aa)) constitute an HRDC domain.

The protein belongs to the RNase D family. A divalent metal cation is required as a cofactor.

It localises to the cytoplasm. The enzyme catalyses Exonucleolytic cleavage that removes extra residues from the 3'-terminus of tRNA to produce 5'-mononucleotides.. Exonuclease involved in the 3' processing of various precursor tRNAs. Initiates hydrolysis at the 3'-terminus of an RNA molecule and releases 5'-mononucleotides. The chain is Ribonuclease D from Serratia proteamaculans (strain 568).